Reading from the N-terminus, the 51-residue chain is Large ribosomal subunit protein eL39 (51 aa).

The segment at methionine 1 to methionine 23 is disordered. Basic residues predominate over residues serine 7 to glutamine 19.

This sequence belongs to the eukaryotic ribosomal protein eL39 family. Interacts with impact.

The sequence is that of Large ribosomal subunit protein eL39 (rpl-39) from Caenorhabditis elegans.